The sequence spans 89 residues: Co-chaperonin GroES (89 aa).

The protein belongs to the GroES chaperonin family. As to quaternary structure, heptamer of 7 subunits arranged in a ring. Interacts with the chaperonin GroEL.

Its subcellular location is the cytoplasm. Its function is as follows. Together with the chaperonin GroEL, plays an essential role in assisting protein folding. The GroEL-GroES system forms a nano-cage that allows encapsulation of the non-native substrate proteins and provides a physical environment optimized to promote and accelerate protein folding. GroES binds to the apical surface of the GroEL ring, thereby capping the opening of the GroEL channel. This Kosmotoga olearia (strain ATCC BAA-1733 / DSM 21960 / TBF 19.5.1) protein is Co-chaperonin GroES.